We begin with the raw amino-acid sequence, 319 residues long: 2-dehydropantoate 2-reductase (319 aa).

NADP(+)-binding positions include 10 to 15 (GTGALG) and asparagine 105. Asparagine 105 serves as a coordination point for substrate. Lysine 192 (proton donor) is an active-site residue. 3 residues coordinate substrate: asparagine 196, asparagine 200, and serine 262. Glutamate 274 contacts NADP(+).

It belongs to the ketopantoate reductase family.

The protein localises to the cytoplasm. It carries out the reaction (R)-pantoate + NADP(+) = 2-dehydropantoate + NADPH + H(+). Its pathway is cofactor biosynthesis; (R)-pantothenate biosynthesis; (R)-pantoate from 3-methyl-2-oxobutanoate: step 2/2. Functionally, catalyzes the NADPH-dependent reduction of ketopantoate into pantoic acid. This is 2-dehydropantoate 2-reductase from Nostoc sp. (strain PCC 7120 / SAG 25.82 / UTEX 2576).